The following is a 344-amino-acid chain: Small neutral protease regulatory protein (344 aa).

Residues 1 to 60 (MELEVRHLRALCAIADAGSLHRAARRLGVAQPTLSTQLTRIEQALGGPLFTRERTGCRPT) enclose the HTH lysR-type domain. Positions 20–39 (LHRAARRLGVAQPTLSTQLT) form a DNA-binding region, H-T-H motif. The interval 322 to 344 (SCGRAEGSRSRRPRDVAPPRPIG) is disordered. The span at 327–338 (EGSRSRRPRDVA) shows a compositional bias: basic and acidic residues.

Belongs to the LysR transcriptional regulatory family.

Transcriptional activator of the gene (snpA) for the small neutral protease. In Streptomyces lividans, this protein is Small neutral protease regulatory protein (mprR).